The sequence spans 520 residues: Biotinidase (520 aa).

The N-terminal stretch at 1–21 is a signal peptide; it reads MSGARTAPALFFLGCSALALG. In terms of domain architecture, CN hydrolase spans 49–333; sequence NPLELVSRQE…TGNTTSEMDP (285 aa). The active-site Proton acceptor is glutamate 89. N-linked (GlcNAc...) asparagine glycosylation is found at asparagine 96, asparagine 127, and asparagine 180. Lysine 189 (proton donor) is an active-site residue. Catalysis depends on cysteine 222, which acts as the Nucleophile. N-linked (GlcNAc...) asparagine glycosylation is found at asparagine 326, asparagine 379, and asparagine 466.

The protein belongs to the carbon-nitrogen hydrolase superfamily. BTD/VNN family.

Its subcellular location is the secreted. It localises to the extracellular space. It carries out the reaction biocytin + H2O = biotin + L-lysine. The enzyme catalyses biotin amide + H2O = biotin + NH4(+). In terms of biological role, catalytic release of biotin from biocytin, the product of biotin-dependent carboxylases degradation. This Mus musculus (Mouse) protein is Biotinidase (Btd).